The chain runs to 284 residues: MEAIKKKMQAMKLEKDNAIDRAEIAEQKARDANLRAEKSEEEVRALQKKIQQIENELDQVQEQLSAANTKLEEKEKALQTAEGDVAALNRRIQLIEEDLERSEERLKIATAKLEEASQSADESERMRKMLEHRSITDEERMDGLENQLKEARMMAEDADRKYDEVARKLAMVEADLERAEERAETGESKIVELEEELRVVGNNLKSLEVSEEKAQQREEAYEQQIRIMTAKLKEAEARAEFAERSVQKLQKEVDRLEDELVHEKEKYKSISDELDQTFAELTGY.

Positions 1-284 form a coiled coil; it reads MEAIKKKMQA…DQTFAELTGY (284 aa).

The protein belongs to the tropomyosin family. As to quaternary structure, homodimer.

Its function is as follows. Tropomyosin, in association with the troponin complex, plays a central role in the calcium dependent regulation of muscle contraction. This is Tropomyosin from Dermatophagoides farinae (American house dust mite).